We begin with the raw amino-acid sequence, 414 residues long: Probable serine/threonine-protein kinase CHK1 homolog (414 aa).

The Protein kinase domain occupies 4 to 255 (YELQETLASG…VSTVMKDPWV (252 aa)). ATP is bound by residues 10–18 (LASGSTSKV) and Lys32. Asp121 acts as the Proton acceptor in catalysis. The segment at 291-310 (PGEVHKTPRTRPVSSQPRRA) is disordered.

This sequence belongs to the protein kinase superfamily. CAMK Ser/Thr protein kinase family. NIM1 subfamily.

Its subcellular location is the nucleus. The enzyme catalyses L-seryl-[protein] + ATP = O-phospho-L-seryl-[protein] + ADP + H(+). It catalyses the reaction L-threonyl-[protein] + ATP = O-phospho-L-threonyl-[protein] + ADP + H(+). Functionally, serine/threonine-protein kinase which is required for checkpoint-mediated cell cycle arrest and activation of DNA repair in response to the presence of DNA damage or unreplicated DNA. May also negatively regulate cell cycle progression during unperturbed cell cycles. The protein is Probable serine/threonine-protein kinase CHK1 homolog (CHK1) of Encephalitozoon cuniculi (strain GB-M1) (Microsporidian parasite).